Here is a 387-residue protein sequence, read N- to C-terminus: Carboxynorspermidine/carboxyspermidine decarboxylase (387 aa).

Lysine 51 bears the N6-(pyridoxal phosphate)lysine mark. The substrate site is built by glutamate 248 and aspartate 284.

The protein belongs to the Orn/Lys/Arg decarboxylase class-II family. NspC subfamily. Homodimer. The cofactor is pyridoxal 5'-phosphate.

The protein localises to the cytoplasm. It carries out the reaction carboxynorspermidine + H(+) = norspermidine + CO2. The catalysed reaction is carboxyspermidine + H(+) = spermidine + CO2. Functionally, catalyzes the decarboxylation of carboxynorspermidine and carboxyspermidine. Essential for biofilm formation. In Vibrio cholerae serotype O1 (strain ATCC 39315 / El Tor Inaba N16961), this protein is Carboxynorspermidine/carboxyspermidine decarboxylase.